The following is a 221-amino-acid chain: Tetraspanin-2 (221 aa).

At 1–13 (MGRFRGGLRCIKY) the chain is on the cytoplasmic side. Residues 14-34 (LLLGFNLLFWLAGSAVIAFGL) form a helical membrane-spanning segment. Residues 35 to 54 (WFRFGGAIKELSSEDKSPEY) lie on the Extracellular side of the membrane. The helical transmembrane segment at 55-75 (FYVGLYVLVGAGALMMAVGFF) threads the bilayer. Topologically, residues 76–90 (GCCGAMRESQCVLGS) are cytoplasmic. A helical membrane pass occupies residues 91–111 (FFTCLLVIFAAEVTTGVFAFI). Residues 112–188 (GKGVAIRHVQ…ETIISVKLQL (77 aa)) lie on the Extracellular side of the membrane. N139 carries an N-linked (GlcNAc...) asparagine glycan. The helical transmembrane segment at 189–209 (IGIVGIGIAGLTIFGMIFSMV) threads the bilayer. Topologically, residues 210–221 (LCCAIRNSRDVI) are cytoplasmic.

This sequence belongs to the tetraspanin (TM4SF) family.

The protein resides in the membrane. May play a role in signalling in oligodendrocytes in the early stages of their terminal differentiation into myelin-forming glia and may also function in stabilizing the mature sheath. The polypeptide is Tetraspanin-2 (TSPAN2) (Homo sapiens (Human)).